The chain runs to 1073 residues: Lon protease homolog, mitochondrial (1073 aa).

The transit peptide at 1–27 (MIKASKCNKARALFLVRTSIPRTFIRN) directs the protein to the mitochondrion. 2 stretches are compositionally biased toward basic and acidic residues: residues 69–107 (FDSKKEKQPSTDKSNDKDKPSRKEKGKDKEKENEERKDI) and 113–123 (YDIKEETDSKP). A disordered region spans residues 69 to 173 (FDSKKEKQPS…DKEFLSPSDA (105 aa)). Residues 132 to 150 (SSKSSISSSSGGANNNNNN) show a composition bias toward low complexity. Residues 158 to 167 (DDGSPKDKEF) show a composition bias toward basic and acidic residues. In terms of domain architecture, Lon N-terminal spans 177 to 395 (PPFLAIAMKD…LSLQLLQVEA (219 aa)). 543-550 (GPPGTGKT) provides a ligand contact to ATP. Over residues 775 to 785 (SVISDKAKKDA) the composition is skewed to basic and acidic residues. Positions 775-821 (SVISDKAKKDAGSSSIESNDSNTEAKVSTTTENEKKQEQKQKQDEEI) are disordered. Residues 790–805 (IESNDSNTEAKVSTTT) show a composition bias toward polar residues. The span at 806 to 821 (ENEKKQEQKQKQDEEI) shows a compositional bias: basic and acidic residues. The Lon proteolytic domain occupies 856–1044 (TLNPGVATGL…SEVFEHLFKG (189 aa)). Active-site residues include serine 950 and lysine 993.

It belongs to the peptidase S16 family. In terms of assembly, homohexamer or homoheptamer. Organized in a ring with a central cavity.

Its subcellular location is the mitochondrion matrix. The enzyme catalyses Hydrolysis of proteins in presence of ATP.. In terms of biological role, ATP-dependent serine protease that mediates the selective degradation of misfolded, unassembled or oxidatively damaged polypeptides as well as certain short-lived regulatory proteins in the mitochondrial matrix. May also have a chaperone function in the assembly of inner membrane protein complexes. Participates in the regulation of mitochondrial gene expression and in the maintenance of the integrity of the mitochondrial genome. Binds to mitochondrial DNA in a site-specific manner. This Candida dubliniensis (strain CD36 / ATCC MYA-646 / CBS 7987 / NCPF 3949 / NRRL Y-17841) (Yeast) protein is Lon protease homolog, mitochondrial.